The sequence spans 292 residues: NAD kinase (292 aa).

Asp-73 functions as the Proton acceptor in the catalytic mechanism. Residues 73–74 (DG), 147–148 (NE), His-158, Arg-175, Asp-177, 188–193 (TAYSLS), and Gln-247 contribute to the NAD(+) site.

This sequence belongs to the NAD kinase family. A divalent metal cation serves as cofactor.

It is found in the cytoplasm. The enzyme catalyses NAD(+) + ATP = ADP + NADP(+) + H(+). In terms of biological role, involved in the regulation of the intracellular balance of NAD and NADP, and is a key enzyme in the biosynthesis of NADP. Catalyzes specifically the phosphorylation on 2'-hydroxyl of the adenosine moiety of NAD to yield NADP. In Salmonella dublin (strain CT_02021853), this protein is NAD kinase.